The chain runs to 201 residues: Dermatopontin (201 aa).

Positions 1 to 18 (MDLTLLWVLLPLVTTAWG) are cleaved as a signal peptide. The residue at position 19 (Q19) is a Pyrrolidone carboxylic acid. A 2 X 53-55 AA tandem repeats region spans residues 19-186 (QYGGYGYPYQ…AVERDRQWKF (168 aa)). Y23 is subject to Sulfotyrosine. 4 tandem repeats follow at residues 26–79 (PYQQ…ACMP), 70–75 (DRQWNY), 80–135 (TPQS…CCRY), and 125–130 (DREWQF). 5 disulfides stabilise this stretch: C50/C77, C90/C132, C106/C133, C139/C196, and C143/C189. The segment at 70–186 (DRQWNYACMP…AVERDRQWKF (117 aa)) is 3 X 6 AA tandem repeats of D-R-[EQ]-W-[NQK]-[FY]. Residues Y162, Y164, and Y167 each carry the sulfotyrosine modification. The 2-3 repeat unit spans residues 181-186 (DRQWKF). Sulfotyrosine is present on Y194.

This sequence belongs to the dermatopontin family. In terms of assembly, interacts with TGFB1, DCN and collagen. In terms of processing, sulfated on tyrosine residue(s).

It localises to the secreted. The protein localises to the extracellular space. The protein resides in the extracellular matrix. Seems to mediate adhesion by cell surface integrin binding. May serve as a communication link between the dermal fibroblast cell surface and its extracellular matrix environment. Enhances TGFB1 activity. Inhibits cell proliferation. Accelerates collagen fibril formation, and stabilizes collagen fibrils against low-temperature dissociation. In Mus musculus (Mouse), this protein is Dermatopontin (Dpt).